The sequence spans 565 residues: Urocanate hydratase (565 aa).

NAD(+) is bound by residues 58-59 (GG), Gln136, 182-184 (GMG), Glu202, Arg207, 245-246 (NA), 266-270 (QTSAH), 276-277 (YL), and Tyr325. Residue Cys413 is part of the active site. Residue Gly495 participates in NAD(+) binding.

This sequence belongs to the urocanase family. NAD(+) serves as cofactor.

Its subcellular location is the cytoplasm. The catalysed reaction is 4-imidazolone-5-propanoate = trans-urocanate + H2O. The protein operates within amino-acid degradation; L-histidine degradation into L-glutamate; N-formimidoyl-L-glutamate from L-histidine: step 2/3. In terms of biological role, catalyzes the conversion of urocanate to 4-imidazolone-5-propionate. In Vibrio vulnificus (strain YJ016), this protein is Urocanate hydratase.